Reading from the N-terminus, the 350-residue chain is Protein RecA (350 aa).

68–75 provides a ligand contact to ATP; sequence GPESSGKT.

This sequence belongs to the RecA family.

Its subcellular location is the cytoplasm. Can catalyze the hydrolysis of ATP in the presence of single-stranded DNA, the ATP-dependent uptake of single-stranded DNA by duplex DNA, and the ATP-dependent hybridization of homologous single-stranded DNAs. It interacts with LexA causing its activation and leading to its autocatalytic cleavage. This chain is Protein RecA, found in Symbiobacterium thermophilum (strain DSM 24528 / JCM 14929 / IAM 14863 / T).